We begin with the raw amino-acid sequence, 3660 residues long: Dystrophin (3660 aa).

Positions 1-244 are actin-binding; the sequence is MSAHVLWYEE…YVTSLFQVLP (244 aa). Calponin-homology (CH) domains follow at residues 19–123 and 138–244; these read DVQK…LHWQ and TNSE…QVLP. Spectrin repeat units lie at residues 341-449, 450-558, 561-669, 721-830, 832-936, 945-1047, 1050-1156, 1159-1265, 1268-1369, 1470-1570, 1573-1678, 1681-1782, 1879-1981, 2013-2103, 2106-2211, 2214-2321, 2472-2574, 2577-2683, 2686-2799, 2802-2904, 2906-2928, and 2931-3037; these read MDLD…NLHK, ILMD…LLQD, RKWQ…QVSQ, EIRK…WLEY, NSII…QLQT, RYKD…KLED, TKLQ…ALKG, DKTV…TLEE, ACWH…SLEQ, EQRL…ELEK, KLSR…LLME, KHME…FIPL, HQWY…TVLE, LSEV…RFDK, EKWR…RIEE, NILS…EIEI, FNKA…QLHE, KDST…ALES, LMLQ…HLEA, DQWK…LRRQ, DDVR…KIDD, and ERLQ…QLHE. Residues 3052–3085 enclose the WW domain; the sequence is TSVQGPWERAISPNKVPYYINHETQTTCWDHPKM. The segment at 3305–3361 adopts a ZZ-type; degenerate zinc-finger fold; sequence KHQAKCNICKECPIIGFRYRSLKHFNYDICQSCFFSGRVAKGHKMHYPMVEYCTPTT. Zn(2+) is bound by residues Cys-3310, Cys-3313, Cys-3334, and Cys-3337. Disordered regions lie at residues 3503–3526 and 3575–3660; these read KQQH…VSPQ and PQAD…EATM. Polar residues-rich tracts occupy residues 3582-3601 and 3637-3647; these read NGTT…SSQP and QLNNSFPSSRG.

It localises to the cell membrane. Its subcellular location is the sarcolemma. The protein resides in the cytoplasm. It is found in the cytoskeleton. The protein localises to the postsynaptic cell membrane. In terms of biological role, may play a role in anchoring the cytoskeleton to the plasma membrane. The chain is Dystrophin (DMD) from Gallus gallus (Chicken).